A 206-amino-acid chain; its full sequence is MILVFLGPPGAGKGTQAKRLAKEKGFVHISTGDILREAVQKGTPLGKKAKEYMERGELVPDDLIIALIEEVFPKHGNVIFDGFPRTVKQAEALDEMLEKKGLKVDHVLLFEVPDEVVIERLSGRRINPETGEVYHVKYNPPPPGVKVIQREDDKPEVIKKRLEVYREQTAPLIEYYKKKGILRIIDASKPVEEVYRQVLEVIGDGN.

10 to 15 contacts ATP; that stretch reads GAGKGT. Residues 30–59 form an NMP region; it reads STGDILREAVQKGTPLGKKAKEYMERGELV. AMP-binding positions include Thr-31, 57 to 59, 82 to 85, and Gln-89; these read ELV and GFPR. ATP is bound by residues Arg-120, Arg-124, and 133–134; that span reads VY. The tract at residues 123–153 is LID; sequence GRRINPETGEVYHVKYNPPPPGVKVIQREDD. Arg-161 serves as a coordination point for AMP. An ATP-binding site is contributed by Lys-189.

Belongs to the adenylate kinase family. Monomer.

It is found in the cytoplasm. It catalyses the reaction AMP + ATP = 2 ADP. Its pathway is purine metabolism; AMP biosynthesis via salvage pathway; AMP from ADP: step 1/1. Functionally, catalyzes the reversible transfer of the terminal phosphate group between ATP and AMP. Plays an important role in cellular energy homeostasis and in adenine nucleotide metabolism. This chain is Adenylate kinase, found in Aquifex aeolicus (strain VF5).